Reading from the N-terminus, the 148-residue chain is Cytochrome c-type biogenesis protein CcmE (148 aa).

At 1 to 7 the chain is on the cytoplasmic side; sequence MKPRHKK. A helical; Signal-anchor for type II membrane protein transmembrane segment spans residues 8–28; that stretch reads LAIIASSVTALGVASVLVLNA. Residues 29–148 lie on the Periplasmic side of the membrane; that stretch reads FQSNLVFFFS…ADKARKTVMQ (120 aa). The heme site is built by His-123 and Tyr-127.

The protein belongs to the CcmE/CycJ family.

It localises to the cell inner membrane. Functionally, heme chaperone required for the biogenesis of c-type cytochromes. Transiently binds heme delivered by CcmC and transfers the heme to apo-cytochromes in a process facilitated by CcmF and CcmH. This chain is Cytochrome c-type biogenesis protein CcmE, found in Nitrosospira multiformis (strain ATCC 25196 / NCIMB 11849 / C 71).